The following is a 118-amino-acid chain: Ribonuclease P protein component (118 aa).

It belongs to the RnpA family. In terms of assembly, consists of a catalytic RNA component (M1 or rnpB) and a protein subunit.

The catalysed reaction is Endonucleolytic cleavage of RNA, removing 5'-extranucleotides from tRNA precursor.. Functionally, RNaseP catalyzes the removal of the 5'-leader sequence from pre-tRNA to produce the mature 5'-terminus. It can also cleave other RNA substrates such as 4.5S RNA. The protein component plays an auxiliary but essential role in vivo by binding to the 5'-leader sequence and broadening the substrate specificity of the ribozyme. The protein is Ribonuclease P protein component of Vibrio parahaemolyticus serotype O3:K6 (strain RIMD 2210633).